The sequence spans 210 residues: 3,4-dihydroxy-2-butanone 4-phosphate synthase (210 aa).

D-ribulose 5-phosphate contacts are provided by residues 33–34, D38, 146–150, and E170; these read RE and RRGHT. Position 34 (E34) interacts with Mg(2+). H149 lines the Mg(2+) pocket.

It belongs to the DHBP synthase family. As to quaternary structure, homodimer. Requires Mg(2+) as cofactor. The cofactor is Mn(2+).

The catalysed reaction is D-ribulose 5-phosphate = (2S)-2-hydroxy-3-oxobutyl phosphate + formate + H(+). Its pathway is cofactor biosynthesis; riboflavin biosynthesis; 2-hydroxy-3-oxobutyl phosphate from D-ribulose 5-phosphate: step 1/1. Catalyzes the conversion of D-ribulose 5-phosphate to formate and 3,4-dihydroxy-2-butanone 4-phosphate. The protein is 3,4-dihydroxy-2-butanone 4-phosphate synthase of Chromobacterium violaceum (strain ATCC 12472 / DSM 30191 / JCM 1249 / CCUG 213 / NBRC 12614 / NCIMB 9131 / NCTC 9757 / MK).